The primary structure comprises 221 residues: ATP phosphoribosyltransferase (221 aa).

This sequence belongs to the ATP phosphoribosyltransferase family. Short subfamily. As to quaternary structure, heteromultimer composed of HisG and HisZ subunits.

The protein localises to the cytoplasm. It catalyses the reaction 1-(5-phospho-beta-D-ribosyl)-ATP + diphosphate = 5-phospho-alpha-D-ribose 1-diphosphate + ATP. It functions in the pathway amino-acid biosynthesis; L-histidine biosynthesis; L-histidine from 5-phospho-alpha-D-ribose 1-diphosphate: step 1/9. Catalyzes the condensation of ATP and 5-phosphoribose 1-diphosphate to form N'-(5'-phosphoribosyl)-ATP (PR-ATP). Has a crucial role in the pathway because the rate of histidine biosynthesis seems to be controlled primarily by regulation of HisG enzymatic activity. This Symbiobacterium thermophilum (strain DSM 24528 / JCM 14929 / IAM 14863 / T) protein is ATP phosphoribosyltransferase.